The following is a 410-amino-acid chain: MEAENAGSYSLQQAQAFYTFPFQQLMAEAPNMAVVNEQQMPEEVPAPAPAQEPVQEAPKGRKRKPRTTEPKQPVEPKKPVESKKSGKSAKSKEKQEKITDTFKVKRKVDRFNGVSEAELLTKTLPDILTFNLDIVIIGINPGLMAAYKGHHYPGPGNHFWKCLFMSGLSEVQLNHMDDHTLPGKYGIGFTNMVERTTPGSKDLSSKEFREGGRILVQKLQKYQPRIAVFNGKCIYEIFSKEVFGVKVKNLEFGLQPHKIPDTETLCYVMPSSSARCAQFPRAQDKVHYYIKLKDLRDQLKGIERNMDVQEVQYTFDLQLAQEDAKKMAVKEEKYDPGYEAAYGGAYGENPCSSEPCGFSSNGLIESVELRGESAFSGIPNGQWMTQSFTDQIPSFSNHCGTQEQEEESHA.

The interval 37–97 (EQQMPEEVPA…SAKSKEKQEK (61 aa)) is disordered. Basic and acidic residues predominate over residues 66–97 (RTTEPKQPVEPKKPVESKKSGKSAKSKEKQEK). Glycyl lysine isopeptide (Lys-Gly) (interchain with G-Cter in SUMO2) cross-links involve residues Lys-103 and Lys-248. A Glycyl lysine isopeptide (Lys-Gly) (interchain with G-Cter in SUMO); alternate cross-link involves residue Lys-330. Lys-330 is covalently cross-linked (Glycyl lysine isopeptide (Lys-Gly) (interchain with G-Cter in SUMO2); alternate).

The protein belongs to the uracil-DNA glycosylase (UDG) superfamily. TDG/mug family. As to quaternary structure, homodimer. Interacts with AICDA and GADD45A. In terms of processing, sumoylation on Lys-330 by either SUMO1 or SUMO2 induces dissociation of the product DNA.

Its subcellular location is the nucleus. It carries out the reaction Hydrolyzes mismatched double-stranded DNA and polynucleotides, releasing free thymine.. Its function is as follows. DNA glycosylase that plays a key role in active DNA demethylation: specifically recognizes and binds 5-formylcytosine (5fC) and 5-carboxylcytosine (5caC) in the context of CpG sites and mediates their excision through base-excision repair (BER) to install an unmethylated cytosine. Cannot remove 5-hydroxymethylcytosine (5hmC). According to an alternative model, involved in DNA demethylation by mediating DNA glycolase activity toward 5-hydroxymethyluracil (5hmU) produced by deamination of 5hmC. Also involved in DNA repair by acting as a thymine-DNA glycosylase that mediates correction of G/T mispairs to G/C pairs: in the DNA of higher eukaryotes, hydrolytic deamination of 5-methylcytosine to thymine leads to the formation of G/T mismatches. Its role in the repair of canonical base damage is however minor compared to its role in DNA demethylation. It is capable of hydrolyzing the carbon-nitrogen bond between the sugar-phosphate backbone of the DNA and a mispaired thymine. In addition to the G/T, it can remove thymine also from C/T and T/T mispairs in the order G/T &gt;&gt; C/T &gt; T/T. It has no detectable activity on apyrimidinic sites and does not catalyze the removal of thymine from A/T pairs or from single-stranded DNA. It can also remove uracil and 5-bromouracil from mispairs with guanine. The protein is G/T mismatch-specific thymine DNA glycosylase (TDG) of Homo sapiens (Human).